The sequence spans 264 residues: MNTQEIIEALAMLREKKPLVVNITNYVVMNNTANALLALGASPIMAHSQQEMAEMMSFSGALVINIGTLDSVWTPRMHFAVEQANLNNKVVVLDPVGCGASQLRTQTARQIAEAANTLIIRGNASEIIALAGENAQSKGVDALDSSDSALGAACYVAQQYQCSVVISGETDYVVTKEAQYKLNNGHAMMPFVTGMGCTHTALTGAFAAIGDHSGVAATAVLGVAGEIAAEQSAGPGSLQINLLDTLYQLDEETLMNRLKLTVNA.

Methionine 45 serves as a coordination point for substrate. ATP-binding residues include arginine 121 and serine 167. Residue glycine 194 participates in substrate binding.

This sequence belongs to the Thz kinase family. Mg(2+) serves as cofactor.

The enzyme catalyses 5-(2-hydroxyethyl)-4-methylthiazole + ATP = 4-methyl-5-(2-phosphooxyethyl)-thiazole + ADP + H(+). It functions in the pathway cofactor biosynthesis; thiamine diphosphate biosynthesis; 4-methyl-5-(2-phosphoethyl)-thiazole from 5-(2-hydroxyethyl)-4-methylthiazole: step 1/1. Its function is as follows. Catalyzes the phosphorylation of the hydroxyl group of 4-methyl-5-beta-hydroxyethylthiazole (THZ). This is Hydroxyethylthiazole kinase from Aliivibrio salmonicida (strain LFI1238) (Vibrio salmonicida (strain LFI1238)).